A 270-amino-acid polypeptide reads, in one-letter code: Beta carbonic anhydrase 1 (270 aa).

Zn(2+) is bound by residues Cys39, Asp41, His105, and Cys108.

It belongs to the beta-class carbonic anhydrase family. It depends on Zn(2+) as a cofactor.

It carries out the reaction hydrogencarbonate + H(+) = CO2 + H2O. Its function is as follows. Reversible hydration of carbon dioxide. The polypeptide is Beta carbonic anhydrase 1 (Caenorhabditis briggsae).